A 116-amino-acid chain; its full sequence is Large ribosomal subunit protein uL18 (116 aa).

This sequence belongs to the universal ribosomal protein uL18 family. As to quaternary structure, part of the 50S ribosomal subunit; part of the 5S rRNA/L5/L18/L25 subcomplex. Contacts the 5S and 23S rRNAs.

Its function is as follows. This is one of the proteins that bind and probably mediate the attachment of the 5S RNA into the large ribosomal subunit, where it forms part of the central protuberance. The protein is Large ribosomal subunit protein uL18 of Mycoplasma capricolum subsp. capricolum (strain California kid / ATCC 27343 / NCTC 10154).